A 502-amino-acid polypeptide reads, in one-letter code: Tubulin gamma chain (502 aa).

Positions 51–68 are enriched in polar residues; it reads ELNNSGSSPQSYPQQTKP. The interval 51–73 is disordered; sequence ELNNSGSSPQSYPQQTKPNGKYR. GTP is bound at residue 169 to 175; sequence AGGTGSG. Positions 473–482 are enriched in acidic residues; sequence DDEDDLEDGD. Positions 473-502 are disordered; that stretch reads DDEDDLEDGDGGGGGNGNGYNNIDDADMGI.

Belongs to the tubulin family.

The protein localises to the cytoplasm. The protein resides in the cytoskeleton. Its subcellular location is the microtubule organizing center. It localises to the spindle pole body. In terms of biological role, tubulin is the major constituent of microtubules. The gamma chain is found at microtubule organizing centers (MTOC) such as the spindle poles or the centrosome, suggesting that it is involved in the minus-end nucleation of microtubule assembly. In Candida albicans (Yeast), this protein is Tubulin gamma chain (TUB4).